Reading from the N-terminus, the 69-residue chain is Small, acid-soluble spore protein C4 (69 aa).

It belongs to the alpha/beta-type SASP family.

SASP are bound to spore DNA. They are double-stranded DNA-binding proteins that cause DNA to change to an a-like conformation. They protect the DNA backbone from chemical and enzymatic cleavage and are thus involved in dormant spore's high resistance to UV light. This chain is Small, acid-soluble spore protein C4 (SASP-C4), found in Priestia megaterium (Bacillus megaterium).